A 129-amino-acid polypeptide reads, in one-letter code: Phosphomevalonate dehydratase small subunit (129 aa).

Serine 61 (proton acceptor) is an active-site residue.

Belongs to the AcnX type II small subunit family. Heterodimer composed of a large subunit (PMDh-L) and a small subunit (PMDh-S).

It catalyses the reaction (R)-5-phosphomevalonate = (2E)-3-methyl-5-phosphooxypent-2-enoate + H2O. Its pathway is isoprenoid biosynthesis; isopentenyl diphosphate biosynthesis via mevalonate pathway. Its function is as follows. Component of a hydro-lyase that catalyzes the dehydration of mevalonate 5-phosphate (MVA5P) to form trans-anhydromevalonate 5-phosphate (tAHMP). Involved in the archaeal mevalonate (MVA) pathway, which provides fundamental precursors for isoprenoid biosynthesis, such as isopentenyl diphosphate (IPP) and dimethylallyl diphosphate (DMAPP). This chain is Phosphomevalonate dehydratase small subunit, found in Methanocaldococcus jannaschii (strain ATCC 43067 / DSM 2661 / JAL-1 / JCM 10045 / NBRC 100440) (Methanococcus jannaschii).